Consider the following 107-residue polypeptide: DNA-directed RNA polymerase subunit omega (107 aa).

The protein belongs to the RNA polymerase subunit omega family. As to quaternary structure, the RNAP catalytic core consists of 2 alpha, 1 beta, 1 beta' and 1 omega subunit. When a sigma factor is associated with the core the holoenzyme is formed, which can initiate transcription.

The catalysed reaction is RNA(n) + a ribonucleoside 5'-triphosphate = RNA(n+1) + diphosphate. In terms of biological role, promotes RNA polymerase assembly. Latches the N- and C-terminal regions of the beta' subunit thereby facilitating its interaction with the beta and alpha subunits. The chain is DNA-directed RNA polymerase subunit omega from Mycolicibacterium smegmatis (strain ATCC 700084 / mc(2)155) (Mycobacterium smegmatis).